Here is a 194-residue protein sequence, read N- to C-terminus: Crossover junction endodeoxyribonuclease RuvC (194 aa).

Active-site residues include Asp8, Glu72, and Asp144. Residues Asp8, Glu72, and Asp144 each contribute to the Mg(2+) site.

It belongs to the RuvC family. As to quaternary structure, homodimer which binds Holliday junction (HJ) DNA. The HJ becomes 2-fold symmetrical on binding to RuvC with unstacked arms; it has a different conformation from HJ DNA in complex with RuvA. In the full resolvosome a probable DNA-RuvA(4)-RuvB(12)-RuvC(2) complex forms which resolves the HJ. The cofactor is Mg(2+).

The protein resides in the cytoplasm. It carries out the reaction Endonucleolytic cleavage at a junction such as a reciprocal single-stranded crossover between two homologous DNA duplexes (Holliday junction).. Its function is as follows. The RuvA-RuvB-RuvC complex processes Holliday junction (HJ) DNA during genetic recombination and DNA repair. Endonuclease that resolves HJ intermediates. Cleaves cruciform DNA by making single-stranded nicks across the HJ at symmetrical positions within the homologous arms, yielding a 5'-phosphate and a 3'-hydroxyl group; requires a central core of homology in the junction. The consensus cleavage sequence is 5'-(A/T)TT(C/G)-3'. Cleavage occurs on the 3'-side of the TT dinucleotide at the point of strand exchange. HJ branch migration catalyzed by RuvA-RuvB allows RuvC to scan DNA until it finds its consensus sequence, where it cleaves and resolves the cruciform DNA. The sequence is that of Crossover junction endodeoxyribonuclease RuvC from Psychrobacter cryohalolentis (strain ATCC BAA-1226 / DSM 17306 / VKM B-2378 / K5).